A 280-amino-acid chain; its full sequence is Putative aquaporin-10 (280 aa).

The Cytoplasmic segment spans residues 1–8 (MEAVSSEY). A helical transmembrane segment spans residues 9–29 (YFPLYSALGYFALVFGIGEIA). The Extracellular portion of the chain corresponds to 30–64 (RIITAKYVSPRGNSQLFLYELIGTIQMCTCVYENG). A helical transmembrane segment spans residues 65–85 (IIFKNYGFPAIFICVALLLTA). The Cytoplasmic segment spans residues 86–114 (GNIFNRGAMTNCAPIFEQFVFGNLGSSKF). The helical transmembrane segment at 115–135 (LTILSAQLIGATFASKFAYLI) threads the bilayer. Over 136–164 (WNITAPYSTAHLENASNLECILHYKQTAG) the chain is Extracellular. A helical transmembrane segment spans residues 165–185 (IVIGFEIVGAFVVRIVVAQLL). Residues 186-193 (ARPALIKL) lie on the Cytoplasmic side of the membrane. A helical membrane pass occupies residues 194 to 214 (IPFAISAYLSLALYVVGVPGL). The Extracellular segment spans residues 215-233 (NPIVATARLYGCRGIDNSS). Residues 234–254 (FFILYWFCPVLGWLTGAYVVG) form a helical membrane-spanning segment. The Cytoplasmic segment spans residues 255–280 (QKSPSKKSAKDVKAEKKAKAAAKKSD). Residues 256-280 (KSPSKKSAKDVKAEKKAKAAAKKSD) form a disordered region. Positions 262–280 (SAKDVKAEKKAKAAAKKSD) are enriched in basic and acidic residues.

The protein belongs to the MIP/aquaporin (TC 1.A.8) family.

It localises to the membrane. The polypeptide is Putative aquaporin-10 (aqp-10) (Caenorhabditis elegans).